The primary structure comprises 147 residues: Hemoglobin subunit delta (147 aa).

V2 carries the N-acetylalanine; in variant Niigata modification. The Globin domain maps to H3–H147. A Phosphoserine modification is found at S51. Residues H64 and H93 each contribute to the heme b site.

The protein belongs to the globin family. As to quaternary structure, heterotetramer of two alpha chains and two delta chains in adult hemoglobin A2 (HbA2). HbA2 represents less than 3.5% of adult hemoglobin. Red blood cells.

In terms of biological role, involved in oxygen transport from the lung to the various peripheral tissues. This Homo sapiens (Human) protein is Hemoglobin subunit delta (HBD).